The sequence spans 197 residues: Fe/S biogenesis protein NfuA (197 aa).

Residues cysteine 155 and cysteine 158 each coordinate [4Fe-4S] cluster.

It belongs to the NfuA family. In terms of assembly, homodimer. [4Fe-4S] cluster serves as cofactor.

In terms of biological role, involved in iron-sulfur cluster biogenesis. Binds a 4Fe-4S cluster, can transfer this cluster to apoproteins, and thereby intervenes in the maturation of Fe/S proteins. Could also act as a scaffold/chaperone for damaged Fe/S proteins. This chain is Fe/S biogenesis protein NfuA, found in Pseudomonas syringae pv. syringae (strain B728a).